A 61-amino-acid chain; its full sequence is Conotoxin Bt5.1 (61 aa).

Positions 1 to 22 (MRGLPVFVILLLLIASEPSVDA) are cleaved as a signal peptide. The propeptide occupies 23-48 (RPKTKADVPLTSLNDNAKRTLQILRN).

It belongs to the conotoxin T superfamily. Post-translationally, contains 2 disulfide bonds that can be either 'C1-C3, C2-C4' or 'C1-C4, C2-C3', since these disulfide connectivities have been observed for conotoxins with cysteine framework V (for examples, see AC P0DQQ7 and AC P81755). In terms of tissue distribution, expressed by the venom duct.

It localises to the secreted. This is Conotoxin Bt5.1 from Conus betulinus (Beech cone).